Reading from the N-terminus, the 584-residue chain is Aspartate--tRNA(Asp/Asn) ligase (584 aa).

Glutamate 177 contributes to the L-aspartate binding site. The aspartate stretch occupies residues 201–204; sequence QLFK. Arginine 223 serves as a coordination point for L-aspartate. ATP contacts are provided by residues 223–225 and glutamine 232; that span reads RDE. L-aspartate is bound at residue histidine 447. Glutamate 481 is an ATP binding site. Position 488 (arginine 488) interacts with L-aspartate. 533–536 is an ATP binding site; the sequence is GLDR.

This sequence belongs to the class-II aminoacyl-tRNA synthetase family. Type 1 subfamily. In terms of assembly, homodimer.

The protein localises to the cytoplasm. It catalyses the reaction tRNA(Asx) + L-aspartate + ATP = L-aspartyl-tRNA(Asx) + AMP + diphosphate. Functionally, aspartyl-tRNA synthetase with relaxed tRNA specificity since it is able to aspartylate not only its cognate tRNA(Asp) but also tRNA(Asn). Reaction proceeds in two steps: L-aspartate is first activated by ATP to form Asp-AMP and then transferred to the acceptor end of tRNA(Asp/Asn). The protein is Aspartate--tRNA(Asp/Asn) ligase of Chlamydia abortus (strain DSM 27085 / S26/3) (Chlamydophila abortus).